The sequence spans 205 residues: Small ribosomal subunit protein uS4 (205 aa).

The span at 1-12 (MSKRVQAKHKLD) shows a compositional bias: basic residues. A disordered region spans residues 1–49 (MSKRVQAKHKLDRRMGQNIWGRPKSPVNRREYGPGQHGQRRKGKMSDFG). One can recognise an S4 RNA-binding domain in the interval 94–155 (RRLDAVVYRS…ASRQLEIVVV (62 aa)).

This sequence belongs to the universal ribosomal protein uS4 family. Part of the 30S ribosomal subunit. Contacts protein S5. The interaction surface between S4 and S5 is involved in control of translational fidelity.

One of the primary rRNA binding proteins, it binds directly to 16S rRNA where it nucleates assembly of the body of the 30S subunit. Functionally, with S5 and S12 plays an important role in translational accuracy. The chain is Small ribosomal subunit protein uS4 from Methylorubrum populi (strain ATCC BAA-705 / NCIMB 13946 / BJ001) (Methylobacterium populi).